Reading from the N-terminus, the 455-residue chain is Beta-cyclopiazonate dehydrogenase (455 aa).

Positions Met-1–Ala-20 are cleaved as a signal peptide.

Belongs to the beta-cyclopiazonate dehydrogenase family. The cofactor is FAD.

It carries out the reaction beta-cyclopiazonate + A = alpha-cyclopiazonate + AH2. In terms of biological role, beta-cyclopiazonate dehydrogenase involved in the synthesis of the fungal neurotoxin alpha-cyclopiazonic acid (CPA). CpaO carries out the dehydrogenation of beta-CPA to yield an unstable enimine product, which is captured by intramolecular cyclization to create the pentacyclic fused scaffold of alpha-cyclopiazonate. The chain is Beta-cyclopiazonate dehydrogenase from Aspergillus flavus (strain ATCC 200026 / FGSC A1120 / IAM 13836 / NRRL 3357 / JCM 12722 / SRRC 167).